The following is a 301-amino-acid chain: Mating type protein mtA-1 (301 aa).

The segment at residues 49 to 104 is a DNA-binding region (alpha box); that stretch reads APKKKVNGFMGFRSYYSSLFSQFPQKARSPFMTILWQHDPFHNEWDFMCSVYSSIR.

This sequence belongs to the MATALPHA1 family.

It is found in the nucleus. Its function is as follows. Mating type proteins are sequence specific DNA-binding proteins that act as master switches in fungal differentiation by controlling gene expression in a cell type-specific fashion. Transcriptional activator that induces the transcription of alpha-specific genes. The chain is Mating type protein mtA-1 (MTA1) from Sordaria fimicola.